Consider the following 265-residue polypeptide: Apolipoprotein A-I (265 aa).

An N-terminal signal peptide occupies residues 1-18 (MKAVVLTLAVLFLTGSQA). 2 tandem repeats follow at residues 67 to 88 (LKLLDNWDSLGSTFTKVREQLG) and 89 to 110 (PVTQEFWDNLEKETEALRQEMS). Positions 67–265 (LKLLDNWDSL…DEASKKLNAQ (199 aa)) are 10 X approximate tandem repeats. Residue M109 is modified to Methionine sulfoxide. One copy of the 3; half-length repeat lies at 111–121 (KDLEEVKKKVQ). Repeat copies occupy residues 122 to 142 (PYLDDFQNKWQEEMETYRQKM), 144 to 165 (PLGAEFREGARQKVQELQEKLS), 166 to 187 (PLAEELRDRLRAHVEALRQHVA), 188 to 209 (PYSDDLRQRMAARFEALKEGGG), and 210 to 230 (SLAEYQAKAQEQLKALGEKAK). Methionine sulfoxide is present on M135. The stretch at 231-241 (PALEDLRQGLL) is one 9; half-length repeat. Copy 10 of the repeat occupies 242-265 (PVLENLKVSILAAIDEASKKLNAQ).

Belongs to the apolipoprotein A1/A4/E family. In terms of assembly, homodimer. Interacts with APOA1BP and CLU. Component of a sperm activating protein complex (SPAP), consisting of APOA1, an immunoglobulin heavy chain, an immunoglobulin light chain and albumin. Interacts with NDRG1. Interacts with SCGB3A2. Interacts with NAXE and YJEFN3. In terms of processing, glycosylated. Palmitoylated. Post-translationally, phosphorylation sites are present in the extracellular medium. Major protein of plasma HDL, also found in chylomicrons. Synthesized predominantly in the intestine and the liver.

Its subcellular location is the secreted. In terms of biological role, participates in the reverse transport of cholesterol from tissues to the liver for excretion by promoting cholesterol efflux from tissues and by acting as a cofactor for the lecithin cholesterol acyltransferase (LCAT). As part of the SPAP complex, activates spermatozoa motility. This Sus scrofa (Pig) protein is Apolipoprotein A-I (APOA1).